The following is a 259-amino-acid chain: 5'-nucleotidase SurE (259 aa).

4 residues coordinate a divalent metal cation: D8, D9, S40, and N92.

The protein belongs to the SurE nucleotidase family. A divalent metal cation is required as a cofactor.

It localises to the cytoplasm. It carries out the reaction a ribonucleoside 5'-phosphate + H2O = a ribonucleoside + phosphate. In terms of biological role, nucleotidase that shows phosphatase activity on nucleoside 5'-monophosphates. The polypeptide is 5'-nucleotidase SurE (Xanthomonas axonopodis pv. citri (strain 306)).